A 282-amino-acid polypeptide reads, in one-letter code: PAK4-inhibitor INKA1 (282 aa).

Disordered stretches follow at residues 21–50 and 92–127; these read RDTG…QFRA and GFSE…FSVS. Inka box regions lie at residues 163 to 200 and 256 to 282; these read EAED…ELPE and PADI…VSYL.

The protein belongs to the INKA family. In terms of assembly, interacts with PAK4. In terms of tissue distribution, expressed in tissues of the developing head during neurulation.

It is found in the nucleus. Its subcellular location is the cytoplasm. Functionally, inhibitor of the serine/threonine-protein kinase PAK4. Acts by binding PAK4 in a substrate-like manner, inhibiting the protein kinase activity. This is PAK4-inhibitor INKA1 from Mus musculus (Mouse).